The primary structure comprises 88 residues: uncharacterized protein (88 aa).

This is an uncharacterized protein from Orgyia pseudotsugata (Douglas-fir tussock moth).